Here is a 219-residue protein sequence, read N- to C-terminus: Zinc finger C2HC domain-containing protein 1B (219 aa).

2 C2HC/C3H-type zinc fingers span residues 14 to 43 (ELFP…LFNK) and 117 to 146 (DYIQ…QESR). C18, C21, H33, C37, C121, C124, H136, and C140 together coordinate Zn(2+). Residues 190-219 (EASAAPTRPAVDPASGAKLRQGFAKSSKKD) form a disordered region.

This sequence belongs to the ZC2HC1 family. The cofactor is Zn(2+).

The chain is Zinc finger C2HC domain-containing protein 1B (ZC2HC1B) from Bos taurus (Bovine).